Here is a 510-residue protein sequence, read N- to C-terminus: MYRALRLLARSRPLVRAPAAALASAPGLGGAAVPSFWPPNAARMASQNSFRIEYDTFGELKVPNDKYYGAQTVRSTMNFKIGGVTERMPTPVIKAFGILKRAAAEVNQDYGLDPKIANAIMKAADEVAEGKLNDHFPLVVWQTGSGTQTNMNVNEVISNRAIEMLGGELGSKIPVHPNDHVNKSQSSNDTFPTAMHIAAAIEVHEVLLPGLQKLHDALDAKSKEFAQIIKIGRTHTQDAVPLTLGQEFSGYVQQVKYAMTRIKAAMPRIYELAAGGTAVGTGLNTRIGFAEKVAAKVAALTGLPFVTAPNKFEALAAHDALVELSGAMNTTACSLMKIANDIRFLGSGPRSGLGELILPENEPGSSIMPGKVNPTQCEAMTMVAAQVMGNHVAVTVGGSNGHFELNVFKPMMIKNVLHSARLLGDASVSFTENCVVGIQANTERINKLMNESLMLVTALNPHIGYDKAAKIAKTAHKNGSTLKETAIELGYLTAEQFDEWVKPKDMLGPK.

The N-terminal 44 residues, 1 to 44 (MYRALRLLARSRPLVRAPAAALASAPGLGGAAVPSFWPPNAARM), are a transit peptide targeting the mitochondrion. An N6-acetyllysine; alternate mark is found at lysine 61, lysine 66, and lysine 80. Residues lysine 61, lysine 66, and lysine 80 each carry the N6-succinyllysine; alternate modification. A phosphothreonine mark is found at threonine 85 and threonine 90. Lysine 94 carries the N6-acetyllysine modification. Residues lysine 115 and lysine 122 each carry the N6-acetyllysine; alternate modification. An N6-succinyllysine; alternate mark is found at lysine 115 and lysine 122. Substrate contacts are provided by residues 145–147 (SGT), 176–179 (HPND), and 186–188 (SSN). N6-acetyllysine is present on lysine 213. At lysine 223 the chain carries N6-acetyllysine; alternate. An N6-succinyllysine; alternate modification is found at lysine 223. Threonine 234 lines the substrate pocket. The Proton donor/acceptor role is filled by histidine 235. Threonine 236 is subject to Phosphothreonine; by PRKDC. The residue at position 256 (lysine 256) is an N6-acetyllysine. Lysine 292 carries the N6-acetyllysine; alternate modification. Position 292 is an N6-succinyllysine; alternate (lysine 292). Serine 365 is an active-site residue. Residues serine 366 and 371–373 (KVN) each bind substrate. At serine 366 the chain carries Phosphoserine. Residues lysine 467 and lysine 473 each carry the N6-succinyllysine modification. Residue lysine 502 is modified to N6-acetyllysine.

It belongs to the class-II fumarase/aspartase family. Fumarase subfamily. As to quaternary structure, homotetramer. Interacts with H2AZ1. Post-translationally, phosphorylation at Thr-236 by PRKDC in response to DNA damage promotes translocation to the nucleus and recruitment to DNA double-strand breaks (DSBs). As to expression, expressed in red blood cells; underexpressed in red blood cells (cytoplasm) of patients with hereditary non-spherocytic hemolytic anemia of unknown etiology.

It is found in the mitochondrion. It localises to the cytoplasm. The protein resides in the cytosol. The protein localises to the nucleus. Its subcellular location is the chromosome. The catalysed reaction is (S)-malate = fumarate + H2O. It participates in carbohydrate metabolism; tricarboxylic acid cycle; (S)-malate from fumarate: step 1/1. In terms of biological role, catalyzes the reversible stereospecific interconversion of fumarate to L-malate. Experiments in other species have demonstrated that specific isoforms of this protein act in defined pathways and favor one direction over the other. Functionally, catalyzes the hydration of fumarate to L-malate in the tricarboxylic acid (TCA) cycle to facilitate a transition step in the production of energy in the form of NADH. Catalyzes the dehydration of L-malate to fumarate. Fumarate metabolism in the cytosol plays a role during urea cycle and arginine metabolism; fumarate being a by-product of the urea cycle and amino-acid catabolism. Also plays a role in DNA repair by promoting non-homologous end-joining (NHEJ). In response to DNA damage and phosphorylation by PRKDC, translocates to the nucleus and accumulates at DNA double-strand breaks (DSBs): acts by catalyzing formation of fumarate, an inhibitor of KDM2B histone demethylase activity, resulting in enhanced dimethylation of histone H3 'Lys-36' (H3K36me2). The chain is Fumarate hydratase, mitochondrial from Homo sapiens (Human).